A 421-amino-acid chain; its full sequence is MFSKAFLSAALLGAAAVEGHMMMAQPVPYGKDTLNNSPLAADGSDFPCKLRSNTYQVTEENTAAIGQSMPLSFIGSAVHGGGSCQVSLTTDREPTKDSKWIVIKSIEGGCPANVDGNLSGGPTSTGASKFTYTIPEGIEPGKYTLAWTWFNRIGNREMYMNCAPLTVTGSSSKRDEVPKEKTVEKRSANFPPMFVANVNGCTTKEGVDIRFPNPGSIVEYAGDKSNLAAEGSQACTGTPTFGGDGNTAGSSGSSGSSSGSSSGGSSSSAAGSGATAPPAPAVSSTLVPKPSQSSAPGVFVPTGSPAQPTHTSAPSGGSSSGSGSSSGSNSGSSSGSSSSSSSSSSSGALTGSCSSEGTWNCIGGSSFQRCANGQWTAVQQMATGTECTAGQASNLKIKATNLKPRMLHEMRHRKRNYHNHA.

The first 19 residues, 1 to 19 (MFSKAFLSAALLGAAAVEG), serve as a signal peptide directing secretion. Residues histidine 20, histidine 79, and glutamate 93 each coordinate Cu(+). 3 disulfides stabilise this stretch: cysteine 48/cysteine 162, cysteine 84/cysteine 110, and cysteine 201/cysteine 235. Asparagine 117 carries an N-linked (GlcNAc...) asparagine glycan. Positions 231 to 349 (GSQACTGTPT…SSSSSSSGAL (119 aa)) are disordered. Residues 247-285 (TAGSSGSSGSSSGSSSGGSSSSAAGSGATAPPAPAVSST) are compositionally biased toward low complexity. Positions 304-314 (SPAQPTHTSAP) are enriched in polar residues. Residues 315 to 349 (SGGSSSGSGSSSGSNSGSSSGSSSSSSSSSSSGAL) show a composition bias toward low complexity.

This sequence belongs to the polysaccharide monooxygenase AA11 family. Cu(2+) is required as a cofactor.

In terms of biological role, lytic polysaccharide monooxygenase (LPMO) that depolymerizes chitin via the oxidation of scissile beta-(1-4)-glycosidic bonds, yielding C1 or C4 oxidation products. Catalysis by LPMOs requires the reduction of the active-site copper from Cu(II) to Cu(I) by a reducing agent and H(2)O(2) or O(2) as a cosubstrate. Active on chitin but has no activity on other substrates, including diverse mannans, cellulose and starch (data not shown). Primary chain cleavage yields predominantly aldonic acid oligosaccharides with even-numbered degrees of polymerization. This chain is AA11 family lytic polysaccharide monooxygenase, found in Aspergillus oryzae (strain ATCC 42149 / RIB 40) (Yellow koji mold).